We begin with the raw amino-acid sequence, 112 residues long: uncharacterized protein (112 aa).

To U.parvum UU089.1.

This is an uncharacterized protein from Synechocystis sp. (strain ATCC 27184 / PCC 6803 / Kazusa).